A 256-amino-acid polypeptide reads, in one-letter code: 4-hydroxy-tetrahydrodipicolinate reductase (256 aa).

NAD(+)-binding positions include 12–17 (GINGRV), D39, 86–88 (GTT), and 110–113 (AANY). The Proton donor/acceptor role is filled by H144. Residue H145 participates in (S)-2,3,4,5-tetrahydrodipicolinate binding. K148 functions as the Proton donor in the catalytic mechanism. A (S)-2,3,4,5-tetrahydrodipicolinate-binding site is contributed by 154 to 155 (GT).

This sequence belongs to the DapB family.

The protein resides in the cytoplasm. It catalyses the reaction (S)-2,3,4,5-tetrahydrodipicolinate + NAD(+) + H2O = (2S,4S)-4-hydroxy-2,3,4,5-tetrahydrodipicolinate + NADH + H(+). The catalysed reaction is (S)-2,3,4,5-tetrahydrodipicolinate + NADP(+) + H2O = (2S,4S)-4-hydroxy-2,3,4,5-tetrahydrodipicolinate + NADPH + H(+). It functions in the pathway amino-acid biosynthesis; L-lysine biosynthesis via DAP pathway; (S)-tetrahydrodipicolinate from L-aspartate: step 4/4. Functionally, catalyzes the conversion of 4-hydroxy-tetrahydrodipicolinate (HTPA) to tetrahydrodipicolinate. This chain is 4-hydroxy-tetrahydrodipicolinate reductase, found in Gluconacetobacter diazotrophicus (strain ATCC 49037 / DSM 5601 / CCUG 37298 / CIP 103539 / LMG 7603 / PAl5).